A 402-amino-acid polypeptide reads, in one-letter code: Acetate kinase (402 aa).

Asparagine 7 contributes to the Mg(2+) binding site. Position 14 (lysine 14) interacts with ATP. Arginine 95 is a substrate binding site. Aspartate 152 serves as the catalytic Proton donor/acceptor. Residues 212-216 (HLGNG), 286-288 (DMR), and 334-338 (GIGEN) each bind ATP. Glutamate 388 is a Mg(2+) binding site.

This sequence belongs to the acetokinase family. In terms of assembly, homodimer. The cofactor is Mg(2+). Mn(2+) is required as a cofactor.

Its subcellular location is the cytoplasm. It catalyses the reaction acetate + ATP = acetyl phosphate + ADP. It functions in the pathway metabolic intermediate biosynthesis; acetyl-CoA biosynthesis; acetyl-CoA from acetate: step 1/2. In terms of biological role, catalyzes the formation of acetyl phosphate from acetate and ATP. Can also catalyze the reverse reaction. The sequence is that of Acetate kinase from Oleidesulfovibrio alaskensis (strain ATCC BAA-1058 / DSM 17464 / G20) (Desulfovibrio alaskensis).